Reading from the N-terminus, the 79-residue chain is UPF0154 protein lwe1321 (79 aa).

A helical membrane pass occupies residues Trp2 to Ile22. A compositionally biased stretch (polar residues) spans Lys57–Asn66. The interval Lys57–Lys79 is disordered.

This sequence belongs to the UPF0154 family.

The protein localises to the cell membrane. The chain is UPF0154 protein lwe1321 from Listeria welshimeri serovar 6b (strain ATCC 35897 / DSM 20650 / CCUG 15529 / CIP 8149 / NCTC 11857 / SLCC 5334 / V8).